Reading from the N-terminus, the 177-residue chain is Large ribosomal subunit protein uL5 (177 aa).

It belongs to the universal ribosomal protein uL5 family. As to quaternary structure, part of the 50S ribosomal subunit; part of the 5S rRNA/L5/L18/L25 subcomplex. Contacts the 5S rRNA and the P site tRNA. Forms a bridge to the 30S subunit in the 70S ribosome.

This is one of the proteins that bind and probably mediate the attachment of the 5S RNA into the large ribosomal subunit, where it forms part of the central protuberance. In the 70S ribosome it contacts protein S13 of the 30S subunit (bridge B1b), connecting the 2 subunits; this bridge is implicated in subunit movement. Contacts the P site tRNA; the 5S rRNA and some of its associated proteins might help stabilize positioning of ribosome-bound tRNAs. This Wolbachia sp. subsp. Brugia malayi (strain TRS) protein is Large ribosomal subunit protein uL5.